A 117-amino-acid polypeptide reads, in one-letter code: NADH dehydrogenase [ubiquinone] 1 beta subcomplex subunit 9 (117 aa).

Ser2 carries the N-acetylserine modification.

It belongs to the complex I LYR family. As to quaternary structure, complex I is composed of at least 49 different subunits. Expressed in roots, stems, flowers, rosette leaves, cauline leaves and siliques, with the highest expression in the stems.

The protein localises to the mitochondrion inner membrane. In terms of biological role, accessory subunit of the mitochondrial membrane respiratory chain NADH dehydrogenase (Complex I), that is believed to be not involved in catalysis. Complex I functions in the transfer of electrons from NADH to the respiratory chain. The immediate electron acceptor for the enzyme is believed to be ubiquinone. Is required for correct plant growth and development. The protein is NADH dehydrogenase [ubiquinone] 1 beta subcomplex subunit 9 (CIB22) of Arabidopsis thaliana (Mouse-ear cress).